The sequence spans 72 residues: Prokaryotic ubiquitin-like protein Pup (72 aa).

A compositionally biased stretch (gly residues) spans 1–10 (MATKDTGGGQ). The disordered stretch occupies residues 1–45 (MATKDTGGGQQKATRSTEEVEEQAQDAQASEDLAERQEKLSDDVD). The stretch at 10-60 (QQKATRSTEEVEEQAQDAQASEDLAERQEKLSDDVDSVLDEIDDVLEENAE) forms a coiled coil. Positions 28–66 (QASEDLAERQEKLSDDVDSVLDEIDDVLEENAEDFVRSF) are ARC ATPase binding. Residues 33 to 42 (LAERQEKLSD) show a composition bias toward basic and acidic residues. Q72 is subject to Deamidated glutamine. Q72 is covalently cross-linked (Isoglutamyl lysine isopeptide (Gln-Lys) (interchain with K-? in acceptor proteins)).

The protein belongs to the prokaryotic ubiquitin-like protein family. In terms of assembly, strongly interacts with the proteasome-associated ATPase ARC through a hydrophobic interface; the interacting region of Pup lies in its C-terminal half. There is one Pup binding site per ARC hexamer ring. Post-translationally, is modified by deamidation of its C-terminal glutamine to glutamate by the deamidase Dop, a prerequisite to the subsequent pupylation process.

It participates in protein degradation; proteasomal Pup-dependent pathway. In terms of biological role, protein modifier that is covalently attached to lysine residues of substrate proteins, thereby targeting them for proteasomal degradation. The tagging system is termed pupylation. This chain is Prokaryotic ubiquitin-like protein Pup, found in Streptomyces griseus subsp. griseus (strain JCM 4626 / CBS 651.72 / NBRC 13350 / KCC S-0626 / ISP 5235).